Here is a 353-residue protein sequence, read N- to C-terminus: UPF0283 membrane protein YcjF (353 aa).

Basic and acidic residues predominate over residues 1-19 (MSEPLKPRIDFAEPLKEEP). Positions 1 to 48 (MSEPLKPRIDFAEPLKEEPTSAFKAQQTFSEAESHTFAPAAIDERPED) are disordered. Residues 1–69 (MSEPLKPRID…LRPKRSLWRK (69 aa)) lie on the Periplasmic side of the membrane. Residues 70-90 (MVMGGLALFGASVVGQGVQWT) traverse the membrane as a helical segment. Residues 91–99 (MNAWQTQDW) are Cytoplasmic-facing. A helical membrane pass occupies residues 100 to 120 (VALGGCAAGALIVGAGVGSVV). Residues 121–212 (TEWWRLWRLR…ARREISRFAA (92 aa)) are Periplasmic-facing. The helical transmembrane segment at 213–233 (ESTLMIAVSPLALVDMAFIAW) threads the bilayer. Over 234–353 (RNLRLINRIA…LQKSKSSPEK (120 aa)) the chain is Cytoplasmic.

This sequence belongs to the UPF0283 family.

It is found in the cell inner membrane. This Salmonella typhi protein is UPF0283 membrane protein YcjF (ycjF).